A 261-amino-acid chain; its full sequence is MFIAVLLGAYSHLETYFLRVEKYTIETEKLPKGTEIKIMNASDMHLGPVMREDRVEMVKRVYEREKPDILVATGDTVDGNMKNLDYLAQMLAELNPPLGKFAVLGNHEYYVGLNQSLDFLRKAGFRVLRGEAVEINNFLVIAGVDDSDGKRLGYRVFTDELEVLKNVDTKKYVILLKHKPRIKREAIKYVDLVLSGHTHGGVLFFVGYTILRLIFETDRGIKELAPGKYIIVSKGVGTGGPPMRLLSPPDVVIVTIKGKGN.

A divalent metal cation contacts are provided by aspartate 43, histidine 45, aspartate 75, asparagine 106, histidine 197, and histidine 199.

This sequence belongs to the metallophosphoesterase superfamily. A divalent metal cation serves as cofactor.

This is an uncharacterized protein from Aquifex aeolicus (strain VF5).